A 69-amino-acid polypeptide reads, in one-letter code: Large ribosomal subunit protein bL31 (69 aa).

The protein belongs to the bacterial ribosomal protein bL31 family. Type A subfamily. In terms of assembly, part of the 50S ribosomal subunit.

Binds the 23S rRNA. This Mycoplasmopsis pulmonis (strain UAB CTIP) (Mycoplasma pulmonis) protein is Large ribosomal subunit protein bL31.